A 133-amino-acid chain; its full sequence is DNA-directed RNA polymerases I, II, and III subunit rpabc2 (133 aa).

Over residues 1 to 32 the composition is skewed to acidic residues; the sequence is MADFEGGGDDGGYEEFDEGGGFEEEYVEETET. Residues 1–55 form a disordered region; that stretch reads MADFEGGGDDGGYEEFDEGGGFEEEYVEETETTEAYTDIIDPSADANTAEAGRIP.

Belongs to the archaeal Rpo6/eukaryotic RPB6 RNA polymerase subunit family. As to quaternary structure, component of the RNA polymerase I (Pol I), RNA polymerase II (Pol II) and RNA polymerase III (Pol III) complexes consisting of at least 13, 12 and 17 subunits, respectively.

The protein localises to the nucleus. Functionally, DNA-dependent RNA polymerases catalyze the transcription of DNA into RNA using the four ribonucleoside triphosphates as substrates. Common component of RNA polymerases I, II and III which synthesize ribosomal RNA precursors, mRNA precursors and many functional non-coding RNAs, and small RNAs, such as 5S rRNA and tRNAs, respectively. Pol II is the central component of the basal RNA polymerase II transcription machinery. Pols are composed of mobile elements that move relative to each other. In Pol II, RPB6 is part of the clamp element and together with parts of RPB1 and RPB2 forms a pocket to which the RPB4-RPB7 subcomplex binds. This chain is DNA-directed RNA polymerases I, II, and III subunit rpabc2 (polr2f), found in Dictyostelium discoideum (Social amoeba).